A 90-amino-acid polypeptide reads, in one-letter code: Probable Fe(2+)-trafficking protein (90 aa).

This sequence belongs to the Fe(2+)-trafficking protein family.

Could be a mediator in iron transactions between iron acquisition and iron-requiring processes, such as synthesis and/or repair of Fe-S clusters in biosynthetic enzymes. This chain is Probable Fe(2+)-trafficking protein, found in Azoarcus sp. (strain BH72).